The chain runs to 253 residues: Homeotic protein ultrabithorax (253 aa).

Positions 125 to 141 are enriched in low complexity; sequence GNTSNGSNAPNAANGQN. Positions 125–193 are disordered; sequence GNTSNGSNAP…GNGTAGGVPQ (69 aa). Gly residues predominate over residues 176-189; it reads RGGGSAGGGNGTAG. Residues 237–242 carry the Antp-type hexapeptide motif; that stretch reads FYPWMA.

The protein belongs to the Antp homeobox family.

The protein resides in the nucleus. In terms of biological role, sequence-specific transcription factor which is part of a developmental regulatory system that provides cells with specific positional identities on the anterior-posterior axis. Binds the consensus region 5'-TTAAT[GT][GA]-3'. This homeotic protein controls development of the cells in the posterior thoracic and first abdominal segments. It activates the synthesis of the decapentaplegic (DPP) growth factor. This chain is Homeotic protein ultrabithorax (Ubx), found in Drosophila funebris (Fruit fly).